The sequence spans 465 residues: MNQDTICAIATAQGGAIGSIRVSGPEAISITSRIFQPAKAGKLLSEQKPYTLTFGRIYNGEEVIDEVLVSLFRAPHSYTGEDSTEITCHGSSYILQQVMQLLIKNGCRMAQPGEYTQRAFLNGKMDLSQAEAVADLIASSSAATHRLAMSQMRGGFSKELTDLRSKLLNFTSMIELELDFSEEDVEFADRSALRKLADEIEQVISRLVHSFNVGNAIKNGVPVAIIGETNAGKSTLLNVLLNEDKAIVSDIHGTTRDVIEDTINIGGITFRFIDTAGIRETNDTIESLGIERTFQKLDQAEIVLWMVDSSDASSQIKQLSEKIIPRCEEKQLIVVFNKADLIEEMQKEELSALLKNFPKEYTKSIFISAKERRQTDELQKMLINAAHLPTVTQNDIIVTNVRHYEALSKALDAIHRVQDGLDSHISGDFLSQDIRECIFFISDIAGEVTNDMVLQNIFQHFCIGK.

3 residues coordinate (6S)-5-formyl-5,6,7,8-tetrahydrofolate: R21, E85, and K124. One can recognise a TrmE-type G domain in the interval 220 to 387 (GVPVAIIGET…LQKMLINAAH (168 aa)). N230 contacts K(+). GTP is bound by residues 230–235 (NAGKST), 249–255 (SDIHGTT), 274–277 (DTAG), and 337–340 (NKAD). Position 234 (S234) interacts with Mg(2+). The K(+) site is built by S249, I251, and T254. T255 lines the Mg(2+) pocket. Residue K465 coordinates (6S)-5-formyl-5,6,7,8-tetrahydrofolate.

It belongs to the TRAFAC class TrmE-Era-EngA-EngB-Septin-like GTPase superfamily. TrmE GTPase family. As to quaternary structure, homodimer. Heterotetramer of two MnmE and two MnmG subunits. K(+) serves as cofactor.

The protein resides in the cytoplasm. Exhibits a very high intrinsic GTPase hydrolysis rate. Involved in the addition of a carboxymethylaminomethyl (cmnm) group at the wobble position (U34) of certain tRNAs, forming tRNA-cmnm(5)s(2)U34. This chain is tRNA modification GTPase MnmE, found in Bacteroides thetaiotaomicron (strain ATCC 29148 / DSM 2079 / JCM 5827 / CCUG 10774 / NCTC 10582 / VPI-5482 / E50).